The sequence spans 439 residues: Ribosomal protein uS12 methylthiotransferase RimO (439 aa).

An MTTase N-terminal domain is found at M1–Q117. The [4Fe-4S] cluster site is built by C10, C46, C80, C154, C158, and C161. In terms of domain architecture, Radical SAM core spans T140–Q370. In terms of domain architecture, TRAM spans L373–Q439.

The protein belongs to the methylthiotransferase family. RimO subfamily. [4Fe-4S] cluster serves as cofactor.

It is found in the cytoplasm. The catalysed reaction is L-aspartate(89)-[ribosomal protein uS12]-hydrogen + (sulfur carrier)-SH + AH2 + 2 S-adenosyl-L-methionine = 3-methylsulfanyl-L-aspartate(89)-[ribosomal protein uS12]-hydrogen + (sulfur carrier)-H + 5'-deoxyadenosine + L-methionine + A + S-adenosyl-L-homocysteine + 2 H(+). In terms of biological role, catalyzes the methylthiolation of an aspartic acid residue of ribosomal protein uS12. The sequence is that of Ribosomal protein uS12 methylthiotransferase RimO from Syntrophomonas wolfei subsp. wolfei (strain DSM 2245B / Goettingen).